Consider the following 1128-residue polypeptide: Cordon-bleu protein-like 1 (1128 aa).

A disordered region spans residues methionine 1–serine 35. Threonine 139 is modified (phosphothreonine). 3 positions are modified to phosphoserine: serine 204, serine 222, and serine 256. 3 disordered regions span residues lysine 249–aspartate 309, methionine 325–serine 441, and threonine 454–glycine 499. Position 260 is a phosphothreonine (threonine 260). The segment covering phenylalanine 270–proline 286 has biased composition (polar residues). A Phosphoserine modification is found at serine 273. Threonine 284 carries the post-translational modification Phosphothreonine. A KKRRAP 1 motif is present at residues lysine 291–proline 296. Serine 326, serine 333, serine 344, and serine 356 each carry phosphoserine. The segment covering leucine 345 to leucine 357 has biased composition (polar residues). Positions threonine 360–proline 365 match the KKRRAP 2 motif. Over residues serine 397–tyrosine 415 the composition is skewed to polar residues. Over residues serine 416–glutamate 425 the composition is skewed to acidic residues. Residues serine 438, serine 441, serine 461, serine 471, and serine 474 each carry the phosphoserine modification. Residues methionine 475–glutamate 488 show a composition bias toward basic and acidic residues. Residues serine 563, serine 584, serine 786, serine 813, serine 814, and serine 821 each carry the phosphoserine modification. Disordered regions lie at residues threonine 780–proline 840, serine 882–serine 964, arginine 995–methionine 1081, and isoleucine 1103–histidine 1128. Basic and acidic residues predominate over residues leucine 899–methionine 908. Phosphoserine is present on residues serine 911, serine 917, serine 947, serine 1069, and serine 1070. Polar residues-rich tracts occupy residues serine 1045–methionine 1081 and isoleucine 1103–proline 1122. The 21-residue stretch at methionine 1081 to valine 1101 folds into the WH2 domain. Serine 1121 carries the post-translational modification Phosphoserine.

The protein is Cordon-bleu protein-like 1 of Homo sapiens (Human).